We begin with the raw amino-acid sequence, 341 residues long: Glucokinase (341 aa).

18 to 23 (GDIGGT) is an ATP binding site.

The protein belongs to the bacterial glucokinase family.

The protein resides in the cytoplasm. It carries out the reaction D-glucose + ATP = D-glucose 6-phosphate + ADP + H(+). The polypeptide is Glucokinase (Mesorhizobium japonicum (strain LMG 29417 / CECT 9101 / MAFF 303099) (Mesorhizobium loti (strain MAFF 303099))).